A 207-amino-acid polypeptide reads, in one-letter code: LexA repressor (207 aa).

Positions 28 to 48 (VREIGEAVGLASSSTVHGHLA) form a DNA-binding region, H-T-H motif. Catalysis depends on for autocatalytic cleavage activity residues serine 129 and lysine 167.

This sequence belongs to the peptidase S24 family. As to quaternary structure, homodimer.

It catalyses the reaction Hydrolysis of Ala-|-Gly bond in repressor LexA.. Represses a number of genes involved in the response to DNA damage (SOS response), including recA and lexA. In the presence of single-stranded DNA, RecA interacts with LexA causing an autocatalytic cleavage which disrupts the DNA-binding part of LexA, leading to derepression of the SOS regulon and eventually DNA repair. This Bacillus licheniformis (strain ATCC 14580 / DSM 13 / JCM 2505 / CCUG 7422 / NBRC 12200 / NCIMB 9375 / NCTC 10341 / NRRL NRS-1264 / Gibson 46) protein is LexA repressor.